We begin with the raw amino-acid sequence, 145 residues long: Ribosomal RNA large subunit methyltransferase H (145 aa).

Residues L64, G93, and 112-117 (LSPLTF) each bind S-adenosyl-L-methionine.

It belongs to the RNA methyltransferase RlmH family. As to quaternary structure, homodimer.

Its subcellular location is the cytoplasm. The enzyme catalyses pseudouridine(1915) in 23S rRNA + S-adenosyl-L-methionine = N(3)-methylpseudouridine(1915) in 23S rRNA + S-adenosyl-L-homocysteine + H(+). In terms of biological role, specifically methylates the pseudouridine at position 1915 (m3Psi1915) in 23S rRNA. This chain is Ribosomal RNA large subunit methyltransferase H, found in Prochlorococcus marinus (strain NATL2A).